Consider the following 511-residue polypeptide: Thioredoxin reductase 2, mitochondrial (511 aa).

A mitochondrion-targeting transit peptide spans 1 to 21 (MAALRGAAARFRGRAPGGARG). 29 to 58 (DLLVIGGGSGGLACAKEAAQLGKKVAVLDY) provides a ligand contact to FAD. A disulfide bond links C74 and C79. An N6-succinyllysine modification is found at K316. The active-site Proton acceptor is the H484. A cross-link (cysteinyl-selenocysteine (Cys-Sec)) is located at residues 509-510 (CU). Position 510 (U510) is a non-standard amino acid, selenocysteine.

It belongs to the class-I pyridine nucleotide-disulfide oxidoreductase family. Homodimer. It depends on FAD as a cofactor.

The protein localises to the mitochondrion. The enzyme catalyses [thioredoxin]-dithiol + NADP(+) = [thioredoxin]-disulfide + NADPH + H(+). Its activity is regulated as follows. Inhibited by 1-chloro-2,4-dinitrobenzene and by zinc, calcium, magnesium and Fe(2+) ions. Its function is as follows. Involved in the control of reactive oxygen species levels and the regulation of mitochondrial redox homeostasis. Maintains thioredoxin in a reduced state. May play a role in redox-regulated cell signaling. The polypeptide is Thioredoxin reductase 2, mitochondrial (TXNRD2) (Bos taurus (Bovine)).